The primary structure comprises 94 residues: Acylphosphatase (94 aa).

An Acylphosphatase-like domain is found at 7-94 (AVRVRISGRV…NMPRDFRITG (88 aa)). Residues Arg22 and Asn40 contribute to the active site.

It belongs to the acylphosphatase family.

The enzyme catalyses an acyl phosphate + H2O = a carboxylate + phosphate + H(+). The protein is Acylphosphatase (acyP) of Rhizobium etli (strain ATCC 51251 / DSM 11541 / JCM 21823 / NBRC 15573 / CFN 42).